Here is a 465-residue protein sequence, read N- to C-terminus: Cysteine--tRNA ligase (465 aa).

C30 is a binding site for Zn(2+). Residues 32-42 (MTVYDYCHVGH) carry the 'HIGH' region motif. Zn(2+) contacts are provided by C214, H239, and E243. The 'KMSKS' region signature appears at 271 to 275 (KMSKS). K274 is an ATP binding site.

It belongs to the class-I aminoacyl-tRNA synthetase family. Monomer. Zn(2+) is required as a cofactor.

The protein localises to the cytoplasm. It carries out the reaction tRNA(Cys) + L-cysteine + ATP = L-cysteinyl-tRNA(Cys) + AMP + diphosphate. This chain is Cysteine--tRNA ligase, found in Ralstonia nicotianae (strain ATCC BAA-1114 / GMI1000) (Ralstonia solanacearum).